The following is a 396-amino-acid chain: S-adenosylmethionine synthase 1 (396 aa).

Residue E12 coordinates Mg(2+). ATP is bound at residue H18. E46 contacts K(+). 2 residues coordinate L-methionine: E59 and Q102. ATP contacts are provided by residues 170–172, 238–241, D249, 255–256, A272, K276, and K280; these read DGK, SGRF, and RK. D249 is a binding site for L-methionine. K280 contacts L-methionine.

It belongs to the AdoMet synthase family. In terms of assembly, homotetramer. It depends on Mn(2+) as a cofactor. Requires Mg(2+) as cofactor. Co(2+) serves as cofactor. The cofactor is K(+).

The protein resides in the cytoplasm. The catalysed reaction is L-methionine + ATP + H2O = S-adenosyl-L-methionine + phosphate + diphosphate. It functions in the pathway amino-acid biosynthesis; S-adenosyl-L-methionine biosynthesis; S-adenosyl-L-methionine from L-methionine: step 1/1. Functionally, catalyzes the formation of S-adenosylmethionine from methionine and ATP. The reaction comprises two steps that are both catalyzed by the same enzyme: formation of S-adenosylmethionine (AdoMet) and triphosphate, and subsequent hydrolysis of the triphosphate. This Oryza sativa subsp. japonica (Rice) protein is S-adenosylmethionine synthase 1 (SAM1).